The primary structure comprises 525 residues: Eukaryotic translation initiation factor 3 subunit L (525 aa).

Residues 1-19 (MYTQADEYDGGDAGYEDDY) show a composition bias toward acidic residues. A disordered region spans residues 1 to 21 (MYTQADEYDGGDAGYEDDYSG). The region spanning 296 to 502 (DAIRCFSSVL…IHIADTKVDR (207 aa)) is the PCI domain.

It belongs to the eIF-3 subunit L family. Component of the eukaryotic translation initiation factor 3 (eIF-3) complex.

The protein resides in the cytoplasm. In terms of biological role, component of the eukaryotic translation initiation factor 3 (eIF-3) complex, which is involved in protein synthesis of a specialized repertoire of mRNAs and, together with other initiation factors, stimulates binding of mRNA and methionyl-tRNAi to the 40S ribosome. The eIF-3 complex specifically targets and initiates translation of a subset of mRNAs involved in cell proliferation. The protein is Eukaryotic translation initiation factor 3 subunit L of Nematostella vectensis (Starlet sea anemone).